A 337-amino-acid chain; its full sequence is tRNA N6-adenosine threonylcarbamoyltransferase (337 aa).

Fe cation is bound by residues His-111 and His-115. Residues 134 to 138 (LVSGG), Asp-167, Gly-180, and Asn-272 each bind substrate. Asp-300 is a binding site for Fe cation.

This sequence belongs to the KAE1 / TsaD family. Fe(2+) is required as a cofactor.

The protein localises to the cytoplasm. The catalysed reaction is L-threonylcarbamoyladenylate + adenosine(37) in tRNA = N(6)-L-threonylcarbamoyladenosine(37) in tRNA + AMP + H(+). Its function is as follows. Required for the formation of a threonylcarbamoyl group on adenosine at position 37 (t(6)A37) in tRNAs that read codons beginning with adenine. Is involved in the transfer of the threonylcarbamoyl moiety of threonylcarbamoyl-AMP (TC-AMP) to the N6 group of A37, together with TsaE and TsaB. TsaD likely plays a direct catalytic role in this reaction. The sequence is that of tRNA N6-adenosine threonylcarbamoyltransferase from Aeromonas hydrophila subsp. hydrophila (strain ATCC 7966 / DSM 30187 / BCRC 13018 / CCUG 14551 / JCM 1027 / KCTC 2358 / NCIMB 9240 / NCTC 8049).